Here is a 51-residue protein sequence, read N- to C-terminus: Large ribosomal subunit protein eL39 (51 aa).

Belongs to the eukaryotic ribosomal protein eL39 family. As to quaternary structure, component of the large ribosomal subunit. Interacts with IMPACT.

Its subcellular location is the cytoplasm. Its function is as follows. RNA-binding component of the large ribosomal subunit. The ribosome is a large ribonucleoprotein complex responsible for the synthesis of proteins in the cell. The chain is Large ribosomal subunit protein eL39 (Rpl39) from Mus musculus (Mouse).